Reading from the N-terminus, the 266-residue chain is BTB/POZ domain-containing protein KCTD2 (266 aa).

Alanine 2 carries the N-acetylalanine modification. The disordered stretch occupies residues glycine 38–arginine 79. A compositionally biased stretch (low complexity) spans threonine 53 to alanine 63. Residues glutamine 76–glutamate 174 enclose the BTB domain.

The sequence is that of BTB/POZ domain-containing protein KCTD2 (Kctd2) from Mus musculus (Mouse).